A 340-amino-acid polypeptide reads, in one-letter code: Protein-arginine kinase (340 aa).

Positions 21-242 (VVLSSRIRLA…EQIIMQERVA (222 aa)) constitute a Phosphagen kinase C-terminal domain. ATP is bound by residues 24–28 (SSRIR), H79, R113, 164–168 (RASVM), and 195–200 (RGIYGE).

Belongs to the ATP:guanido phosphotransferase family.

The catalysed reaction is L-arginyl-[protein] + ATP = N(omega)-phospho-L-arginyl-[protein] + ADP + H(+). In terms of biological role, catalyzes the specific phosphorylation of arginine residues in proteins. This is Protein-arginine kinase from Listeria monocytogenes serotype 4b (strain F2365).